The sequence spans 1053 residues: LRR receptor-like serine/threonine-protein kinase GHR1 (1053 aa).

The signal sequence occupies residues 1–18; the sequence is MNLSRILLLSMFFLSAMG. At 19 to 630 the chain is on the extracellular side; sequence QLPSQDIMAL…NKSTNKLVKV (612 aa). LRR repeat units lie at residues 73–93, 94–119, 121–141, 142–165, 166–189, 191–212, 213–237, 239–260, 262–285, 286–309, 310–333, 335–357, and 358–384; these read GVVL…FSNL, TKLV…SFKS, QFLD…IGRS, VSLR…MGGL, ISLQ…LTRL, DLLY…GFEL, ISSL…FFLL, NASY…LLPG, SESI…GFQL, FQNL…FNYV, YDLE…LLKG, SLLL…SIMS, and TTLH…CVLL. The N-linked (GlcNAc...) asparagine glycan is linked to Asn92. 2 positions are modified to phosphoserine; by HT1: Ser100 and Ser102. Asn103 is a glycosylation site (N-linked (GlcNAc...) asparagine). Phosphoserine; by HT1 is present on residues Ser105 and Ser126. N-linked (GlcNAc...) asparagine glycosylation is found at Asn146 and Asn153. Asn196 is a glycosylation site (N-linked (GlcNAc...) asparagine). N-linked (GlcNAc...) asparagine glycosylation occurs at Asn239. The residue at position 262 (Ser262) is a Phosphoserine; by HT1. The N-linked (GlcNAc...) asparagine glycan is linked to Asn269. Residue Ser278 is modified to Phosphoserine; by HT1. At Thr280 the chain carries Phosphothreonine; by HT1. At Ser281 the chain carries Phosphoserine; by HT1. Ser325 is subject to Phosphoserine; by HT1. Asn347 carries an N-linked (GlcNAc...) asparagine glycan. Asn394 carries an N-linked (GlcNAc...) asparagine glycan. 8 LRR repeats span residues 401–425, 426–449, 450–474, 476–498, 499–521, 522–546, 548–570, and 572–592; these read WENI…TPQL, LRAN…IPTH, YPKL…LLSM, TLEE…PSSG, SRIR…VFGS, LTNL…MNDI, SLSS…LSSN, and MAFN…LKNF. The residue at position 406 (Tyr406) is a Phosphotyrosine; by HT1. Position 410 is a phosphoserine; by HT1 (Ser410). Position 415 is a phosphothreonine; by HT1 (Thr415). At Ser417 the chain carries Phosphoserine; by HT1. Residue Asn432 is glycosylated (N-linked (GlcNAc...) asparagine). Ser434 is modified (phosphoserine; by HT1). 3 N-linked (GlcNAc...) asparagine glycosylation sites follow: Asn534, Asn566, and Asn575. Phosphoserine; by HT1 occurs at positions 613, 614, and 616. Asn621 carries an N-linked (GlcNAc...) asparagine glycan. Residues 631-651 traverse the membrane as a helical segment; sequence VIIVSCAVALIILILVAILLF. Residues 652 to 1053 lie on the Cytoplasmic side of the membrane; that stretch reads CICKSRRREE…KTIYEDLSSI (402 aa). Residues 662-671 show a composition bias toward basic and acidic residues; sequence RSITGKETNR. Residues 662-684 are disordered; sequence RSITGKETNRRAQTIPSGSGGGM. Phosphothreonine; by HT1 is present on residues Thr669 and Thr675. Phosphoserine; by HT1 is present on residues Ser678, Ser680, Ser698, Ser699, and Ser700. Ser704 carries the post-translational modification Phosphoserine. Residue Thr713 is modified to Phosphothreonine; by HT1. Residues Ser716 and Ser718 each carry the phosphoserine; by HT1 modification. Phosphothreonine; by HT1 is present on Thr720. Phosphoserine; by HT1 is present on residues Ser721, Ser724, and Ser760. Residue Thr764 is modified to Phosphothreonine; by HT1. Ser769 is subject to Phosphoserine; by HT1. Residues 770 to 1053 form the Protein kinase domain; it reads RAPAEVLGRS…KTIYEDLSSI (284 aa). ATP contacts are provided by residues 776–784 and Lys798; that span reads LGRSSHGTS. A phosphothreonine; by HT1 mark is found at Thr928 and Thr1010. Residue Ser1015 is modified to Phosphoserine; by HT1. The residue at position 1045 (Thr1045) is a Phosphothreonine; by HT1. The residue at position 1047 (Tyr1047) is a Phosphotyrosine; by HT1. Phosphoserine; by HT1 occurs at positions 1051 and 1052.

This sequence belongs to the protein kinase superfamily. Ser/Thr protein kinase family. Interacts with SLAC1 (via N-terminus). Binds to ABI2, but not ABI1. Interacts with CPK3. In terms of processing, phosphorylated by HT1; this phosphorylation is inhibited by MPK12 and MPK4. Expressed in guard cells and in the vasculature of roots and leaves.

The protein localises to the cell membrane. The catalysed reaction is L-seryl-[protein] + ATP = O-phospho-L-seryl-[protein] + ADP + H(+). The enzyme catalyses L-threonyl-[protein] + ATP = O-phospho-L-threonyl-[protein] + ADP + H(+). Its activity is regulated as follows. Negatively regulated by ABI2. Receptor kinase acting as an early component in abscisic acid (ABA) signaling. Required for darkness, ABA, high CO(2) and hydrogen peroxide (H(2)O(2)) induction of S-type anion currents in guard cells leading to stomatal closure, possibly via the phosphorylation and activation of the anion channel SLAC1 and as a scaffolding component. Seems to act in parallel with SRK2E/OST1 in the ABA signaling pathway which regulates stomatal movement. Binds ATP. Involved in the local and/or systemic stomatal responses (e.g. stomatal closure) to light stress. This is LRR receptor-like serine/threonine-protein kinase GHR1 from Arabidopsis thaliana (Mouse-ear cress).